Reading from the N-terminus, the 444-residue chain is Tubulin beta 8B (444 aa).

Residues 1-4 carry the MREI motif motif; the sequence is MREI. GTP is bound by residues Gln-11, Glu-69, Ser-138, Gly-142, Thr-143, and Gly-144. Glu-69 is a Mg(2+) binding site. Residue Ser-172 is modified to Phosphoserine; by CDK1. 2 residues coordinate GTP: Asn-204 and Asn-226. Residues 421–444 form a disordered region; that stretch reads EYQQYQDATAEEEEDEEYAEEEVA. Acidic residues predominate over residues 429-444; it reads TAEEEEDEEYAEEEVA. Residue Glu-436 is modified to 5-glutamyl polyglutamate.

This sequence belongs to the tubulin family. Dimer of alpha and beta chains. A typical microtubule is a hollow water-filled tube with an outer diameter of 25 nm and an inner diameter of 15 nM. Alpha-beta heterodimers associate head-to-tail to form protofilaments running lengthwise along the microtubule wall with the beta-tubulin subunit facing the microtubule plus end conferring a structural polarity. Microtubules usually have 13 protofilaments but different protofilament numbers can be found in some organisms and specialized cells. Mg(2+) is required as a cofactor. In terms of processing, some glutamate residues at the C-terminus are polyglutamylated, resulting in polyglutamate chains on the gamma-carboxyl group. Polyglutamylation plays a key role in microtubule severing by spastin (SPAST). SPAST preferentially recognizes and acts on microtubules decorated with short polyglutamate tails: severing activity by SPAST increases as the number of glutamates per tubulin rises from one to eight, but decreases beyond this glutamylation threshold. Glutamylation is also involved in cilia motility. Some glutamate residues at the C-terminus are monoglycylated but not polyglycylated due to the absence of functional TTLL10 in human. Monoglycylation is mainly limited to tubulin incorporated into cilia and flagella axonemes, which is required for their stability and maintenance. Flagella glycylation controls sperm motility. Both polyglutamylation and monoglycylation can coexist on the same protein on adjacent residues, and lowering glycylation levels increases polyglutamylation, and reciprocally. Post-translationally, phosphorylated on Ser-172 by CDK1 during the cell cycle, from metaphase to telophase, but not in interphase. This phosphorylation inhibits tubulin incorporation into microtubules.

It is found in the cytoplasm. Its subcellular location is the cytoskeleton. Tubulin is the major constituent of microtubules, a cylinder consisting of laterally associated linear protofilaments composed of alpha- and beta-tubulin heterodimers. Microtubules grow by the addition of GTP-tubulin dimers to the microtubule end, where a stabilizing cap forms. Below the cap, tubulin dimers are in GDP-bound state, owing to GTPase activity of alpha-tubulin. The protein is Tubulin beta 8B of Homo sapiens (Human).